Here is a 97-residue protein sequence, read N- to C-terminus: Acylphosphatase (97 aa).

The 87-residue stretch at 9-95 folds into the Acylphosphatase-like domain; the sequence is TRHLRIHGLV…CDAQGFEQRE (87 aa). Catalysis depends on residues Arg24 and Asn42.

Belongs to the acylphosphatase family.

It carries out the reaction an acyl phosphate + H2O = a carboxylate + phosphate + H(+). The sequence is that of Acylphosphatase (acyP) from Acidovorax sp. (strain JS42).